The chain runs to 416 residues: MSTNIKIIKKVLNGYVGFANLPKQWHRKSIRRGFSLNIMAIGESGLGKATLINTLFNRDIITSQHDSDEFDEGEEEDVSVKIKSTQAEIEEDGVKLKVSVITAPGFGESINNVEAWKPIVDEINSRFDSYLEAESRINRTAVVDNRVHAFLYFIEPTGHSLRALDIALMKQVHEKVNLIPVIAKSDTLTDEEILEFKHRILADISHQGIKIFKPTDFEYDEEESANTRSIIDSFPFAVVGSTNEVQTPDGRLVRGRKYPWGVIEVDNENHNDFVKLRQLLVRNFLEELKEHTANVLYENYRTEKLKRMGIEQDNTVFREFDPAAKQEEERALHEAKLAKMEAEMKSVFQQKVSEKEKKLQRSEADLFARHKEMKDKLTKQIKLLEEKKAQLEKQKLLPQDPPAQPAPQKSRKGFLR.

Positions 32–307 (RGFSLNIMAI…ENYRTEKLKR (276 aa)) constitute a Septin-type G domain. Positions 42-49 (GESGLGKA) are G1 motif. GTP-binding positions include 42–49 (GESGLGKA), Ser-79, Gly-105, 184–192 (KSDTLTDEE), Gly-240, and Arg-256. The tract at residues 102–105 (TAPG) is G3 motif. A G4 motif region spans residues 183–186 (AKSD). The stretch at 323–399 (AAKQEEERAL…QLEKQKLLPQ (77 aa)) forms a coiled coil. The tract at residues 392-416 (EKQKLLPQDPPAQPAPQKSRKGFLR) is disordered.

The protein belongs to the TRAFAC class TrmE-Era-EngA-EngB-Septin-like GTPase superfamily. Septin GTPase family.

It localises to the bud neck. In terms of biological role, plays a role in the cell cycle. Involved in the formation of the ring of filaments in the neck region at the mother-bud junction during mitosis. In Candida albicans (Yeast), this protein is Cell division control protein 3 (CDC3).